Here is a 369-residue protein sequence, read N- to C-terminus: 3-isopropylmalate dehydrogenase (369 aa).

Positions 98, 108, 136, and 227 each coordinate substrate. 3 residues coordinate Mg(2+): Asp-227, Asp-251, and Asp-255. 290-302 (GSAPDIAGKGIAN) is an NAD(+) binding site.

The protein belongs to the isocitrate and isopropylmalate dehydrogenases family. LeuB type 1 subfamily. As to quaternary structure, homodimer. Mg(2+) is required as a cofactor. Requires Mn(2+) as cofactor.

Its subcellular location is the cytoplasm. The catalysed reaction is (2R,3S)-3-isopropylmalate + NAD(+) = 4-methyl-2-oxopentanoate + CO2 + NADH. It participates in amino-acid biosynthesis; L-leucine biosynthesis; L-leucine from 3-methyl-2-oxobutanoate: step 3/4. Catalyzes the oxidation of 3-carboxy-2-hydroxy-4-methylpentanoate (3-isopropylmalate) to 3-carboxy-4-methyl-2-oxopentanoate. The product decarboxylates to 4-methyl-2 oxopentanoate. The protein is 3-isopropylmalate dehydrogenase of Gluconobacter oxydans (strain 621H) (Gluconobacter suboxydans).